A 122-amino-acid chain; its full sequence is Small ribosomal subunit protein uS13 (122 aa).

Residues 96 to 122 (LPVRGQRTKTNSRTRKGKRKTIAGKKK) form a disordered region. Over residues 101–122 (QRTKTNSRTRKGKRKTIAGKKK) the composition is skewed to basic residues.

The protein belongs to the universal ribosomal protein uS13 family. In terms of assembly, part of the 30S ribosomal subunit. Forms a loose heterodimer with protein S19. Forms two bridges to the 50S subunit in the 70S ribosome.

In terms of biological role, located at the top of the head of the 30S subunit, it contacts several helices of the 16S rRNA. In the 70S ribosome it contacts the 23S rRNA (bridge B1a) and protein L5 of the 50S subunit (bridge B1b), connecting the 2 subunits; these bridges are implicated in subunit movement. Contacts the tRNAs in the A and P-sites. This chain is Small ribosomal subunit protein uS13, found in Chlamydia trachomatis serovar L2 (strain ATCC VR-902B / DSM 19102 / 434/Bu).